Reading from the N-terminus, the 72-residue chain is Translation initiation factor IF-1 (72 aa).

Residues 1–72 (MSKTDVVEIE…TKGRIIWRDK (72 aa)) form the S1-like domain.

The protein belongs to the IF-1 family. As to quaternary structure, component of the 30S ribosomal translation pre-initiation complex which assembles on the 30S ribosome in the order IF-2 and IF-3, IF-1 and N-formylmethionyl-tRNA(fMet); mRNA recruitment can occur at any time during PIC assembly.

The protein localises to the cytoplasm. Functionally, one of the essential components for the initiation of protein synthesis. Stabilizes the binding of IF-2 and IF-3 on the 30S subunit to which N-formylmethionyl-tRNA(fMet) subsequently binds. Helps modulate mRNA selection, yielding the 30S pre-initiation complex (PIC). Upon addition of the 50S ribosomal subunit IF-1, IF-2 and IF-3 are released leaving the mature 70S translation initiation complex. This Lachnoclostridium phytofermentans (strain ATCC 700394 / DSM 18823 / ISDg) (Clostridium phytofermentans) protein is Translation initiation factor IF-1.